The chain runs to 101 residues: Large ribosomal subunit protein uL24 (101 aa).

The protein belongs to the universal ribosomal protein uL24 family. As to quaternary structure, part of the 50S ribosomal subunit.

In terms of biological role, one of two assembly initiator proteins, it binds directly to the 5'-end of the 23S rRNA, where it nucleates assembly of the 50S subunit. Its function is as follows. One of the proteins that surrounds the polypeptide exit tunnel on the outside of the subunit. This chain is Large ribosomal subunit protein uL24, found in Thermobifida fusca (strain YX).